The following is a 1523-amino-acid chain: TALPID3 protein (1523 aa).

The span at 1-16 (MEAESGSSTSQDSLAS) shows a compositional bias: polar residues. Disordered regions lie at residues 1 to 20 (MEAE…LTAG) and 57 to 84 (SRQA…ASNG). Coiled-coil stretches lie at residues 428–466 (IEKT…MNDL) and 499–528 (ILSD…LRAK). The tract at residues 498–585 (SILSDAKRVL…MEQVKYDQKV (88 aa)) is required for centrosomal localization. 5 disordered regions span residues 1070 to 1112 (EPLV…LSGD), 1137 to 1262 (VITP…SEGE), 1294 to 1313 (ANEM…RSHK), 1373 to 1410 (DIDH…DADT), and 1498 to 1523 (SMNI…ADTF). Pro residues predominate over residues 1073-1088 (VPTPLPTPQATPPQTP). Over residues 1099-1108 (TPESSPSITE) the composition is skewed to polar residues. Composition is skewed to low complexity over residues 1137–1149 (VITP…EIIT) and 1236–1251 (SSEQ…PTET). Residues 1373 to 1386 (DIDHATARASEDRP) show a composition bias toward basic and acidic residues. Residues 1507 to 1523 (SLSSIHGDSDSSGADTF) are compositionally biased toward low complexity.

The protein belongs to the TALPID3 family. As to expression, ubiquitously expressed.

It is found in the cytoplasm. It localises to the cytoskeleton. The protein localises to the microtubule organizing center. Its subcellular location is the centrosome. Functionally, required for ciliogenesis and sonic hedgehog/SHH signaling. Independently, involved in regulation of cell intracellular organization. Involved in regulation of cell polarity. In Gallus gallus (Chicken), this protein is TALPID3 protein (TALPID3).